A 358-amino-acid polypeptide reads, in one-letter code: Beta-lactamase (358 aa).

S60 serves as the catalytic Acyl-ester intermediate. The active-site Proton acceptor is the Y146. Residue 311-313 coordinates substrate; it reads KTG.

The protein belongs to the class-C beta-lactamase family.

The protein resides in the periplasm. It catalyses the reaction a beta-lactam + H2O = a substituted beta-amino acid. Functionally, this protein is a serine beta-lactamase with a substrate specificity for cephalosporins. The sequence is that of Beta-lactamase from Pseudomonas fluorescens.